The primary structure comprises 429 residues: Glucose-6-phosphate isomerase (429 aa).

The active-site Proton donor is Glu282. Residues His303 and Lys418 contribute to the active site.

Belongs to the GPI family.

It localises to the cytoplasm. It catalyses the reaction alpha-D-glucose 6-phosphate = beta-D-fructose 6-phosphate. The protein operates within carbohydrate biosynthesis; gluconeogenesis. It functions in the pathway carbohydrate degradation; glycolysis; D-glyceraldehyde 3-phosphate and glycerone phosphate from D-glucose: step 2/4. Its function is as follows. Catalyzes the reversible isomerization of glucose-6-phosphate to fructose-6-phosphate. This chain is Glucose-6-phosphate isomerase, found in Mesomycoplasma hyopneumoniae (strain 7448) (Mycoplasma hyopneumoniae).